A 632-amino-acid polypeptide reads, in one-letter code: Palmitoyltransferase ZDHHC17 (632 aa).

The Cytoplasmic segment spans residues 1 to 304 (MQREEGFNTK…LKADKEFRQK (304 aa)). The tract at residues 11–305 (MADGPDEYET…KADKEFRQKV (295 aa)) is necessary and sufficient for interaction with DNAJC5 and SNAP25. ANK repeat units follow at residues 51–86 (THID…VRQP), 89–118 (ENVT…IVDQ), 123–152 (LNST…DPSL), 156–185 (EGCS…DVDM), 189–219 (NGMT…SVNL), 224–253 (HKNT…NVDA), and 257–286 (KGES…AKGY). The next 2 membrane-spanning stretches (helical) occupy residues 305 to 325 (VMLG…DLDI) and 326 to 346 (DSWL…QFLS). The Cytoplasmic portion of the chain corresponds to 347–357 (KSFFDHSMHSA). The chain crosses the membrane as a helical span at residues 358–378 (LPLGIYLATKFWMYVTWFFWF). Over 379–381 (WND) the chain is Lumenal. Residues 382–402 (LNFLFIHLPFLANSVALFYNF) traverse the membrane as a helical segment. Over 403–480 (GKSWKSDPGI…GNCVGAGNHR (78 aa)) the chain is Cytoplasmic. Residues 437–487 (IFCSTCLIRKPVRSKHCGVCNRCIAKFDHHCPWVGNCVGAGNHRYFMGYLF) form the DHHC domain. The S-palmitoyl cysteine intermediate role is filled by C467. The chain crosses the membrane as a helical span at residues 481–501 (YFMGYLFFLLFMICWMIYGCV). Residues 502–529 (SYWGLHCETTYTKDGFWTYITQIATCSP) are Lumenal-facing. The chain crosses the membrane as a helical span at residues 530-550 (WMFWMFLNSVFHFLWVAVLLM). The Cytoplasmic segment spans residues 551–632 (CQLYQITCLG…QISGSGYQLV (82 aa)).

This sequence belongs to the DHHC palmitoyltransferase family. AKR/ZDHHC17 subfamily. In terms of assembly, interacts (via ANK repeats) with numerous proteins (via the consensus sequence motif [VIAP]-[VIT]-x-x-Q-P). Interacts (via ANK repeats) with CLIP3. Interacts (via ANK repeats) with HTT. Interacts (via ANK repeats) with DNAJC5 (via C-terminus). Interacts (via ANK repeats) with MAP6. Interacts (via ANK repeats) with SNAP23. Interacts (via ANK repeats) with SNAP25. Interacts (via ANK repeats) with EVL. Interacts with SPRED1 and SPRED3. Interacts with GPM6A and OPTN. May interact (via ANK repeats) with SPRED2. May interact with NTRK1; may regulate its localization and function. Post-translationally, autopalmitoylated. Autopalmitoylation has a regulatory role in ZDHHC17-mediated Mg(2+) transport. As to expression, expressed in liver, testis, kidney, heart, pancreas and brain. Highest expression was seen in the brain. Localized predominantly in the perinuclear regions of neurons from the cortex, striatum and hippocampus. Colocalized with HTT in the medium spiny neurons of the striatum and the spiny neurons that project into the globus pallidus.

Its subcellular location is the golgi apparatus membrane. It localises to the cytoplasmic vesicle membrane. The protein resides in the presynaptic cell membrane. It catalyses the reaction L-cysteinyl-[protein] + hexadecanoyl-CoA = S-hexadecanoyl-L-cysteinyl-[protein] + CoA. The catalysed reaction is L-cysteinyl-[protein] + tetradecanoyl-CoA = S-tetradecanoyl-L-cysteinyl-[protein] + CoA. The enzyme catalyses L-cysteinyl-[protein] + octadecanoyl-CoA = S-octadecanoyl-L-cysteinyl-[protein] + CoA. Palmitoyltransferase that catalyzes the addition of palmitate onto various protein substrates and is involved in a variety of cellular processes. Has no stringent fatty acid selectivity and in addition to palmitate can also transfer onto target proteins myristate from tetradecanoyl-CoA and stearate from octadecanoyl-CoA. Palmitoyltransferase specific for a subset of neuronal proteins, including SNAP25, DLG4/PSD95, GAD2, SYT1 and HTT. Also palmitoylates neuronal protein GPM6A as well as SPRED1 and SPRED3. Could also play a role in axonogenesis through the regulation of NTRK1 and the downstream ERK1/ERK2 signaling cascade. May be involved in the sorting or targeting of critical proteins involved in the initiating events of endocytosis at the plasma membrane. May play a role in Mg(2+) transport. Could also palmitoylate DNAJC5 and regulate its localization to the Golgi membrane. Palmitoylates CASP6, thereby preventing its dimerization and subsequent activation. This Mus musculus (Mouse) protein is Palmitoyltransferase ZDHHC17.